Here is a 551-residue protein sequence, read N- to C-terminus: Eukaryotic translation initiation factor 3 subunit D-2 (551 aa).

Residues 108–152 are disordered; it reads RTRGRTGRGTPNIASLGGSTAGGATASSTKYGKGRHTRNTQNVGR. Low complexity predominate over residues 115–136; it reads RGTPNIASLGGSTAGGATASST. An RNA gate region spans residues 290 to 304; the sequence is QFDLLTVNETSVEPP. Residues 527-551 are disordered; sequence PENAFDSDRDEEEESSEPLSNSNDN.

The protein belongs to the eIF-3 subunit D family. As to quaternary structure, component of the eukaryotic translation initiation factor 3 (eIF-3) complex. The eIF-3 complex interacts with pix.

Its subcellular location is the cytoplasm. Functionally, mRNA cap-binding component of the eukaryotic translation initiation factor 3 (eIF-3) complex, which is involved in protein synthesis of a specialized repertoire of mRNAs and, together with other initiation factors, stimulates binding of mRNA and methionyl-tRNAi to the 40S ribosome. The eIF-3 complex specifically targets and initiates translation of a subset of mRNAs involved in cell proliferation. In the eIF-3 complex, eif3d specifically recognizes and binds the 7-methylguanosine cap of a subset of mRNAs. The polypeptide is Eukaryotic translation initiation factor 3 subunit D-2 (Drosophila simulans (Fruit fly)).